Here is a 135-residue protein sequence, read N- to C-terminus: Small ribosomal subunit protein uS12 (135 aa).

The tract at residues 1-23 is disordered; sequence MPTINQLVRKGRHSKTTKSDSPA. Aspartate 102 carries the 3-methylthioaspartic acid modification.

The protein belongs to the universal ribosomal protein uS12 family. As to quaternary structure, part of the 30S ribosomal subunit. Contacts proteins S8 and S17. May interact with IF1 in the 30S initiation complex.

Functionally, with S4 and S5 plays an important role in translational accuracy. Its function is as follows. Interacts with and stabilizes bases of the 16S rRNA that are involved in tRNA selection in the A site and with the mRNA backbone. Located at the interface of the 30S and 50S subunits, it traverses the body of the 30S subunit contacting proteins on the other side and probably holding the rRNA structure together. The combined cluster of proteins S8, S12 and S17 appears to hold together the shoulder and platform of the 30S subunit. The protein is Small ribosomal subunit protein uS12 of Lactobacillus gasseri (strain ATCC 33323 / DSM 20243 / BCRC 14619 / CIP 102991 / JCM 1131 / KCTC 3163 / NCIMB 11718 / NCTC 13722 / AM63).